Consider the following 298-residue polypeptide: GTP cyclohydrolase FolE2 (298 aa).

This sequence belongs to the GTP cyclohydrolase IV family.

The enzyme catalyses GTP + H2O = 7,8-dihydroneopterin 3'-triphosphate + formate + H(+). It participates in cofactor biosynthesis; 7,8-dihydroneopterin triphosphate biosynthesis; 7,8-dihydroneopterin triphosphate from GTP: step 1/1. Converts GTP to 7,8-dihydroneopterin triphosphate. This chain is GTP cyclohydrolase FolE2, found in Pseudomonas aeruginosa (strain UCBPP-PA14).